Consider the following 552-residue polypeptide: HTH-type transcriptional regulator SgrR (552 aa).

Positions 1 to 116 (MPSARLQQQF…LVSHLGRSFR (116 aa)) constitute an HTH marR-type domain. Positions 26-49 (LNELAALLSCSRRHMRTLLNTMQD) form a DNA-binding region, H-T-H motif. Positions 163–492 (ELEADIAHHW…IDWQADAARW (330 aa)) are solute-binding.

In terms of biological role, activates the small RNA gene sgrS under glucose-phosphate stress conditions as well as yfdZ. Represses its own transcription under both stress and non-stress conditions. Might act as a sensor of the intracellular accumulation of phosphoglucose by binding these molecules in its C-terminal solute-binding domain. The sequence is that of HTH-type transcriptional regulator SgrR from Shigella dysenteriae serotype 1 (strain Sd197).